The primary structure comprises 264 residues: Diphthine synthase (264 aa).

S-adenosyl-L-methionine contacts are provided by residues leucine 10, aspartate 87, valine 90, 115–116 (SI), leucine 166, alanine 209, and histidine 234.

The protein belongs to the diphthine synthase family. Homodimer.

It catalyses the reaction 2-[(3S)-amino-3-carboxypropyl]-L-histidyl-[translation elongation factor 2] + 3 S-adenosyl-L-methionine = diphthine-[translation elongation factor 2] + 3 S-adenosyl-L-homocysteine + 3 H(+). Its pathway is protein modification; peptidyl-diphthamide biosynthesis. Its function is as follows. S-adenosyl-L-methionine-dependent methyltransferase that catalyzes the trimethylation of the amino group of the modified target histidine residue in translation elongation factor 2 (EF-2), to form an intermediate called diphthine. The three successive methylation reactions represent the second step of diphthamide biosynthesis. This Thermococcus kodakarensis (strain ATCC BAA-918 / JCM 12380 / KOD1) (Pyrococcus kodakaraensis (strain KOD1)) protein is Diphthine synthase.